Here is a 1278-residue protein sequence, read N- to C-terminus: Cytoplasmic FMR1-interacting protein 2 (1278 aa).

K1062 is modified (N6-acetyllysine).

It belongs to the CYFIP family. In terms of assembly, component of the WAVE1 complex composed of ABI2, CYFIP2, BRK1, NCKAP1 and WASF1/WAVE1. Interacts with FMR1, FXR1 and FXR2. Interacts with FMR1 isoform 6; the interaction occurs in a RNA-dependent manner. Interacts with RAC1 (activated form) which causes the complex to dissociate, releasing activated WASF1. The complex can also be activated by NCK1. Interacts with SHANK3; the interaction mediates the association of SHANK3 with the WAVE1 complex. Interacts with TMEM108 (via N-terminus); the interaction associates TMEM108 with the WAVE1 complex. Expressed in T-cells. Increased expression is observed in CD4(+) T-lymphocytes from patients with multiple sclerosis (at protein level).

The protein resides in the cytoplasm. The protein localises to the nucleus. It is found in the perinuclear region. Its subcellular location is the synapse. It localises to the synaptosome. In terms of biological role, involved in T-cell adhesion and p53/TP53-dependent induction of apoptosis. Does not bind RNA. As component of the WAVE1 complex, required for BDNF-NTRK2 endocytic trafficking and signaling from early endosomes. This Homo sapiens (Human) protein is Cytoplasmic FMR1-interacting protein 2.